Here is a 161-residue protein sequence, read N- to C-terminus: 18.1 kDa class I heat shock protein (161 aa).

One can recognise a sHSP domain in the interval 45–160 (DVAAFTNARV…QVKSIDISGA (116 aa)).

It belongs to the small heat shock protein (HSP20) family. In terms of assembly, may form oligomeric structures. Binds to AKR2A.

The protein resides in the cytoplasm. This is 18.1 kDa class I heat shock protein (HSP18.1) from Arabidopsis thaliana (Mouse-ear cress).